The following is a 1173-amino-acid chain: MSTIDLPTSSLPGSSGDPSGTEMSHSDVDVSVDIDVIFPDHTQTLSFSLLLSNTIHDVRQVILELMLAPPHTCFHLEYKREKLHSFLEIGQIPHLKLSKTRKIVLEVVLDPYTERESKYHIYTLLEFLSRKLPSSSTSPGIRAGFCIFPSLNIPSGENLQIKSSSSLEEINKIPENIVTQSLSYTNLLKKFETSPNPSNNGCFRSLALSGWNPVPAEFVIQGHLLYLTVLTIEGKTYNITSHVSGFYVNNCTSTKFDPSPCDDLQSHSLVLLLEQLSPLFKERLHLSLNDYKSGDAIAQASITGTLPQAPWITFPVPHRADLSRTQKSELFPYIENQGNLRDWNEEIQSTREMDHEDVQDRVLRERLTVKTLQDFTDMAVEGAIDMVNGNIPSLNPLEPTASQMFVHNNIFFSYGRDSVGIFSTKGGDSAAYSAVGKDILAIRLLNQFDLSNPSLLGTCVVDYAGHRVVAQTIVPGIFKQLENGSSHLIYGKVEGESDFRFDESFEGELSRISDLLHIKKHFFVDGKEKSFPLYTSMDAKALKGSDGRTYLMDLYSLFPLDAQFLEVISDEKNEEFPAYPHKLVHVRPELVQLFYEMKLQAFVNANHNAPKKKNLNDSLKSVELEGNGIKLSSEKGKNNVNKVRNDNARFDCGFNPDCFRSDYIFPPDNKELYDKDIENSYALSQYLHAEVIPNFVKSLSEPSSFLPIDGVALCRAMHRSGINIRYLGEIANIILQKSPNNVILLKLVTSEIFIRSIKHVFRNFLAVVPQVLRSHLLSHLLNNLFTVYGYVEPTKPLINENIANLFFQATQVIYSINSTSLYSSIKKEASSRFRFNLTDDLLHSLNPICILRGTCLRLGIQISCKDYFSNKSDDKICEEHAVPNGSTKFTGKKGNKKKRNLGKSQNTTNRQVESEQINIFRPKDILNLMPVIKTCIPYSGLAQESLEACKACLLQGNKELCYNLLNESLSLHEQIYGVLHTEVARAYCQLAMIYHQLEKKEEAVELARKAVIVCERFLGFDSSETSLAYMNLSLYEFSQKNEMQAVMHMQHALKLWYLVFGPDHPNTINSFTNLSLMLHGSEKFIQSQKCLQIAVDLSDKIFGKTTPTASLYLQLAQLMVLNKDSRSALHAVRVAYDILKETLGPDHQNTKEAEHWLSEFTALAVNQERQSRT.

The segment covering 1–21 (MSTIDLPTSSLPGSSGDPSGT) has biased composition (low complexity). Residues 1–25 (MSTIDLPTSSLPGSSGDPSGTEMSH) are disordered. Positions 316–565 (VPHRADLSRT…SLFPLDAQFL (250 aa)) constitute a Clu domain. The disordered stretch occupies residues 888–910 (KFTGKKGNKKKRNLGKSQNTTNR). Basic residues predominate over residues 890 to 901 (TGKKGNKKKRNL). A TPR repeat occupies 984–1017 (ARAYCQLAMIYHQLEKKEEAVELARKAVIVCERF).

This sequence belongs to the CLU family. As to quaternary structure, may associate with the eukaryotic translation initiation factor 3 (eIF-3) complex.

The protein localises to the cytoplasm. MRNA-binding protein involved in proper cytoplasmic distribution of mitochondria. The sequence is that of Clustered mitochondria protein homolog from Schizosaccharomyces pombe (strain 972 / ATCC 24843) (Fission yeast).